Reading from the N-terminus, the 100-residue chain is Aspartyl/glutamyl-tRNA(Asn/Gln) amidotransferase subunit C (100 aa).

Belongs to the GatC family. As to quaternary structure, heterotrimer of A, B and C subunits.

The enzyme catalyses L-glutamyl-tRNA(Gln) + L-glutamine + ATP + H2O = L-glutaminyl-tRNA(Gln) + L-glutamate + ADP + phosphate + H(+). It carries out the reaction L-aspartyl-tRNA(Asn) + L-glutamine + ATP + H2O = L-asparaginyl-tRNA(Asn) + L-glutamate + ADP + phosphate + 2 H(+). In terms of biological role, allows the formation of correctly charged Asn-tRNA(Asn) or Gln-tRNA(Gln) through the transamidation of misacylated Asp-tRNA(Asn) or Glu-tRNA(Gln) in organisms which lack either or both of asparaginyl-tRNA or glutaminyl-tRNA synthetases. The reaction takes place in the presence of glutamine and ATP through an activated phospho-Asp-tRNA(Asn) or phospho-Glu-tRNA(Gln). The sequence is that of Aspartyl/glutamyl-tRNA(Asn/Gln) amidotransferase subunit C from Streptococcus thermophilus (strain ATCC BAA-491 / LMD-9).